The sequence spans 232 residues: 7-cyano-7-deazaguanine synthase (232 aa).

8 to 18 (FSGGQDSTTCL) is an ATP binding site. Residues Cys-188, Cys-197, Cys-200, and Cys-203 each coordinate Zn(2+).

This sequence belongs to the QueC family. The cofactor is Zn(2+).

The catalysed reaction is 7-carboxy-7-deazaguanine + NH4(+) + ATP = 7-cyano-7-deazaguanine + ADP + phosphate + H2O + H(+). The protein operates within purine metabolism; 7-cyano-7-deazaguanine biosynthesis. Catalyzes the ATP-dependent conversion of 7-carboxy-7-deazaguanine (CDG) to 7-cyano-7-deazaguanine (preQ(0)). This Buchnera aphidicola subsp. Schizaphis graminum (strain Sg) protein is 7-cyano-7-deazaguanine synthase.